Consider the following 639-residue polypeptide: Chaperone protein DnaK (639 aa).

T198 is modified (phosphothreonine; by autocatalysis). Residues 603–618 (AKAQTQGGAQEGAAKQ) show a composition bias toward low complexity. The interval 603 to 639 (AKAQTQGGAQEGAAKQSNATADDVVDAEFEEVKDDKK) is disordered. The span at 625–639 (DVVDAEFEEVKDDKK) shows a compositional bias: acidic residues.

The protein belongs to the heat shock protein 70 family.

Acts as a chaperone. The chain is Chaperone protein DnaK from Shewanella sp. (strain MR-7).